The sequence spans 475 residues: MSPQTETKAGAGFKAGVKDYRLTYYTPDYETKETDVLAAFRMTPQPGVPPEEAGAAVAAESSTGTWTTVWTDGLTSLDRYKGRCYDIEPVPGEENQYIAYVAYPLDLFEEGSVTNLFTSIVGNVFGFKALRALRLEDLRIPAAYAKTFQGPPHGIQVERDKLNKYGRPLLGCTIKPKLGLSAKNYGRAVYECLRGGLDFTKDDENVTSQPFMRWRDRFLFVAEATFKAQAETGEIKGHYLNATAGTCEEMMKRAAYARELGVPIIMHDYLTGGFTANTSLSNYCRDNGLLLHIHRAMHAVIDRQKNHGIHFRVLAKALRMSGGDHIHTGTVVGKLEGERQVTLGFVDLLRDDYIEKDRSRGIYFTQDWVALPGVLPVASGGIHVWHMPALTEIFGDDSVLQFGGGTLGHPWGNAPGAVANRVALEACVQARNEGRDLARQGNDIIREAAKWSPELAAACEVWKEIKFEFDTIDTL.

A propeptide spanning residues 1–2 is cleaved from the precursor; the sequence is MS. An N-acetylproline modification is found at Pro3. Lys14 is modified (N6,N6,N6-trimethyllysine). Substrate contacts are provided by Asn123 and Thr173. Lys175 functions as the Proton acceptor in the catalytic mechanism. Substrate is bound at residue Lys177. Lys201, Asp203, and Glu204 together coordinate Mg(2+). At Lys201 the chain carries N6-carboxylysine. The active-site Proton acceptor is the His294. Substrate-binding residues include Arg295, His327, and Ser379.

It belongs to the RuBisCO large chain family. Type I subfamily. As to quaternary structure, heterohexadecamer of 8 large chains and 8 small chains; disulfide-linked. The disulfide link is formed within the large subunit homodimers. Requires Mg(2+) as cofactor. In terms of processing, the disulfide bond which can form in the large chain dimeric partners within the hexadecamer appears to be associated with oxidative stress and protein turnover.

The protein localises to the plastid. It is found in the chloroplast. It catalyses the reaction 2 (2R)-3-phosphoglycerate + 2 H(+) = D-ribulose 1,5-bisphosphate + CO2 + H2O. The catalysed reaction is D-ribulose 1,5-bisphosphate + O2 = 2-phosphoglycolate + (2R)-3-phosphoglycerate + 2 H(+). Its function is as follows. RuBisCO catalyzes two reactions: the carboxylation of D-ribulose 1,5-bisphosphate, the primary event in carbon dioxide fixation, as well as the oxidative fragmentation of the pentose substrate in the photorespiration process. Both reactions occur simultaneously and in competition at the same active site. The protein is Ribulose bisphosphate carboxylase large chain of Staurastrum punctulatum (Green alga).